We begin with the raw amino-acid sequence, 117 residues long: Large ribosomal subunit protein bL19 (117 aa).

It belongs to the bacterial ribosomal protein bL19 family.

Functionally, this protein is located at the 30S-50S ribosomal subunit interface and may play a role in the structure and function of the aminoacyl-tRNA binding site. In Shewanella amazonensis (strain ATCC BAA-1098 / SB2B), this protein is Large ribosomal subunit protein bL19.